Here is a 619-residue protein sequence, read N- to C-terminus: Putative zinc transporter At3g08650 (619 aa).

The next 15 helical transmembrane spans lie at 25 to 45, 102 to 122, 129 to 149, 155 to 175, 198 to 218, 230 to 250, 261 to 281, 289 to 309, 354 to 374, 383 to 403, 405 to 425, 465 to 485, 528 to 548, 552 to 572, and 585 to 605; these read MMHSSCKGLVLLLFLFVVVFI, VALFTLAMAAATGLGAVPFFF, WAGICNGMAAGVMLAASFDLV, HGSGNWVVTGILAGALFIWLC, VVLVIGIMTLHSFGEGSGVGV, LLVTLAIAVHNIPEGLAVSMV, AMLWSIITSLPQPLVAVPAFL, FLPFCTGFAAGCMIWMVIAEV, GFFVSLLFGLGPLLGGVFLVA, HALLMGVASGIAFVLGLWRPL, LLLSAKMGLIPLVSLLAIGAG, LLACGAVGFHALAEGLALGVA, AAALIGFVGPISAIGSILAGI, GLDHVMVVACGGLLPSFWQVI, and VGMVLGLACAVVCLTFTRLVC.

Belongs to the ZIP transporter (TC 2.A.5) family. ZupT subfamily.

It localises to the membrane. Its function is as follows. May transport zinc. The protein is Putative zinc transporter At3g08650 of Arabidopsis thaliana (Mouse-ear cress).